Here is a 428-residue protein sequence, read N- to C-terminus: Adenylosuccinate synthetase (428 aa).

Residues 12 to 18 (GDEGKGK) and 40 to 42 (GHT) each bind GTP. Asp13 serves as the catalytic Proton acceptor. Asp13 and Gly40 together coordinate Mg(2+). Residues 13–16 (DEGK), 38–41 (NAGH), Thr129, Arg143, Gln224, Thr239, and Arg303 contribute to the IMP site. His41 acts as the Proton donor in catalysis. 299-305 (VTTGRIR) serves as a coordination point for substrate. GTP is bound by residues Arg305, 331–333 (KVD), and 410–412 (AYG).

This sequence belongs to the adenylosuccinate synthetase family. Homodimer. Mg(2+) serves as cofactor.

The protein resides in the cytoplasm. The catalysed reaction is IMP + L-aspartate + GTP = N(6)-(1,2-dicarboxyethyl)-AMP + GDP + phosphate + 2 H(+). It participates in purine metabolism; AMP biosynthesis via de novo pathway; AMP from IMP: step 1/2. Its function is as follows. Plays an important role in the de novo pathway of purine nucleotide biosynthesis. Catalyzes the first committed step in the biosynthesis of AMP from IMP. The chain is Adenylosuccinate synthetase from Francisella tularensis subsp. novicida (strain U112).